Consider the following 47-residue polypeptide: FGIVEGLMTTVHSITATQKVPTPDVSVVDLTVRLVSWYDNEWGYSSR.

This sequence belongs to the glyceraldehyde-3-phosphate dehydrogenase family. Homotetramer.

It is found in the cytoplasm. It catalyses the reaction D-glyceraldehyde 3-phosphate + phosphate + NAD(+) = (2R)-3-phospho-glyceroyl phosphate + NADH + H(+). The protein operates within carbohydrate degradation; glycolysis; pyruvate from D-glyceraldehyde 3-phosphate: step 1/5. The protein is Glyceraldehyde-3-phosphate dehydrogenase, cytosolic of Pseudotsuga menziesii (Douglas-fir).